Here is a 133-residue protein sequence, read N- to C-terminus: Peptide methionine sulfoxide reductase MsrB (133 aa).

The span at 1–12 shows a compositional bias: basic and acidic residues; sequence MSEKVQKSEHEW. The segment at 1 to 36 is disordered; sequence MSEKVQKSEHEWQQQLTPEQYRVTREKGTERPFTGD. Residues 9–132 form the MsrB domain; that stretch reads EHEWQQQLTP…NSVSLDFHPG (124 aa). Residues Cys48, Cys51, Cys97, and Cys100 each coordinate Zn(2+). The active-site Nucleophile is the Cys121.

The protein belongs to the MsrB Met sulfoxide reductase family. Zn(2+) serves as cofactor.

It catalyses the reaction L-methionyl-[protein] + [thioredoxin]-disulfide + H2O = L-methionyl-(R)-S-oxide-[protein] + [thioredoxin]-dithiol. This Chromohalobacter salexigens (strain ATCC BAA-138 / DSM 3043 / CIP 106854 / NCIMB 13768 / 1H11) protein is Peptide methionine sulfoxide reductase MsrB.